Consider the following 384-residue polypeptide: V-type proton ATPase subunit C (384 aa).

This sequence belongs to the V-ATPase C subunit family. In terms of assembly, V-ATPase is a heteromultimeric enzyme made up of two complexes: the ATP-hydrolytic V1 complex and the proton translocation V0 complex. The V1 complex consists of three catalytic AB heterodimers that form a heterohexamer, three peripheral stalks each consisting of EG heterodimers, one central rotor including subunits D and F, and the regulatory subunits C and H. The proton translocation complex V0 consists of the proton transport subunit a, a ring of proteolipid subunits c9c'', rotary subunit d, subunits e and f, and the accessory subunits vah-19/Ac45 and vah-20/PRR. Interacts with V-type proton ATPase subunits a1 unc-32, a2 vha-5 and a3 vha-6. In terms of tissue distribution, expressed ubiquitously; higher levels are found in gastrointestinal and hypodermal cells, as well as H-shaped excretory cell.

The protein resides in the cytoplasm. Its subcellular location is the membrane. Its function is as follows. Subunit of the V1 complex of vacuolar(H+)-ATPase (V-ATPase), a multisubunit enzyme composed of a peripheral complex (V1) that hydrolyzes ATP and a membrane integral complex (V0) that translocates protons. V-ATPase is responsible for acidifying and maintaining the pH of intracellular compartments and in some cell types, is targeted to the plasma membrane, where it is responsible for acidifying the extracellular environment. Subunit C is necessary for the assembly of the catalytic sector of the enzyme and is likely to have a specific function in its catalytic activity. Has roles in embryogenesis and ovulation. The protein is V-type proton ATPase subunit C of Caenorhabditis elegans.